The chain runs to 728 residues: MSTEAKCPFNHTAAGGTSNKDWWPNQLNLNILHRHSALSDPMDKDFDYAQAFKKLDLAAVKRDLQALMTTSQDWWPADFGHYGGLFVRMAWHSAGTYRIADGRGGAGGGQQRFAPLNSWPDNANLDKARRLLWPIKQKYGRNISWADLLILTGNVALESMGFKTFGYAGGRADTWEPDDVYWGSEKIWLELSGGPNSRYSGDRDLENPLAAVQMGLIYVNPEGPDGNPDPVAAARDIRDTFARMAMNDEETVALIAGGHTFGKTHGAGPATDVGPEPEAAGIELQGLGWKSAYASGKGHDAITSGLEVTWTSTPTKWSHDFFKHLFSYEWELTKSPAGAHQWVAKGADEVIPDAFDASKKHRPTMLTTDLSLRFDPAYEKISRRFYENPAEFADAFARAWFKLTHRDMGPRARYLGPEVPAEELLWQDPIPAVDHPLIDDADVAALKAKVLASGLSVAQLVSTAWASASTFRGSDKRGGANGARIRLAPQKDWEVNQPAALAAVLETLEGVRKAFNDAQTGGKKVSLADLIVLAGAAGVEQAAKSAGVAVTVPFAPGRMDASQEQTDVDAMAVLEPVADGFRNYLKSAYKTPAEALLVDKAQLLTLNGPELTVLVGGLRVLGANVGDAKHGVFTDRPGTLSNDFFVNLLDMGTEWKPVSAANDVFEGRDRATGQVKWTGTRVDLIFGSHSQLRALAEVYGSADANEKFVRDFVAAWNKVMNLDRFDLA.

A cross-link (tryptophyl-tyrosyl-methioninium (Trp-Tyr) (with M-244)) is located at residues 91 to 218; the sequence is WHSAGTYRIA…LAAVQMGLIY (128 aa). Histidine 92 serves as the catalytic Proton acceptor. Residues 218–244 constitute a cross-link (tryptophyl-tyrosyl-methioninium (Tyr-Met) (with W-91)); sequence YVNPEGPDGNPDPVAAARDIRDTFARM. Position 259 (histidine 259) interacts with heme b.

The protein belongs to the peroxidase family. Peroxidase/catalase subfamily. As to quaternary structure, homodimer or homotetramer. It depends on heme b as a cofactor. In terms of processing, formation of the three residue Trp-Tyr-Met cross-link is important for the catalase, but not the peroxidase activity of the enzyme.

The catalysed reaction is H2O2 + AH2 = A + 2 H2O. It catalyses the reaction 2 H2O2 = O2 + 2 H2O. Bifunctional enzyme with both catalase and broad-spectrum peroxidase activity. The sequence is that of Catalase-peroxidase 1 from Burkholderia ambifaria (strain ATCC BAA-244 / DSM 16087 / CCUG 44356 / LMG 19182 / AMMD) (Burkholderia cepacia (strain AMMD)).